Reading from the N-terminus, the 166-residue chain is NAD(P)H-quinone oxidoreductase subunit I, chloroplastic (166 aa).

4Fe-4S ferredoxin-type domains are found at residues 55-84 and 95-124; these read GRIH…VDWK and LNYS…MTEE. The [4Fe-4S] cluster site is built by Cys-64, Cys-67, Cys-70, Cys-74, Cys-104, Cys-107, Cys-110, and Cys-114.

This sequence belongs to the complex I 23 kDa subunit family. In terms of assembly, NDH is composed of at least 16 different subunits, 5 of which are encoded in the nucleus. Requires [4Fe-4S] cluster as cofactor.

The protein localises to the plastid. It localises to the chloroplast thylakoid membrane. The catalysed reaction is a plastoquinone + NADH + (n+1) H(+)(in) = a plastoquinol + NAD(+) + n H(+)(out). It catalyses the reaction a plastoquinone + NADPH + (n+1) H(+)(in) = a plastoquinol + NADP(+) + n H(+)(out). Functionally, NDH shuttles electrons from NAD(P)H:plastoquinone, via FMN and iron-sulfur (Fe-S) centers, to quinones in the photosynthetic chain and possibly in a chloroplast respiratory chain. The immediate electron acceptor for the enzyme in this species is believed to be plastoquinone. Couples the redox reaction to proton translocation, and thus conserves the redox energy in a proton gradient. The chain is NAD(P)H-quinone oxidoreductase subunit I, chloroplastic from Lactuca sativa (Garden lettuce).